Consider the following 252-residue polypeptide: Aspartate/glutamate leucyltransferase (252 aa).

This sequence belongs to the R-transferase family. Bpt subfamily.

Its subcellular location is the cytoplasm. The enzyme catalyses N-terminal L-glutamyl-[protein] + L-leucyl-tRNA(Leu) = N-terminal L-leucyl-L-glutamyl-[protein] + tRNA(Leu) + H(+). It catalyses the reaction N-terminal L-aspartyl-[protein] + L-leucyl-tRNA(Leu) = N-terminal L-leucyl-L-aspartyl-[protein] + tRNA(Leu) + H(+). Its function is as follows. Functions in the N-end rule pathway of protein degradation where it conjugates Leu from its aminoacyl-tRNA to the N-termini of proteins containing an N-terminal aspartate or glutamate. The chain is Aspartate/glutamate leucyltransferase from Polynucleobacter necessarius subsp. necessarius (strain STIR1).